Consider the following 173-residue polypeptide: Crossover junction endodeoxyribonuclease RuvC (173 aa).

Catalysis depends on residues D8, E67, and D139. 3 residues coordinate Mg(2+): D8, E67, and D139.

Belongs to the RuvC family. As to quaternary structure, homodimer which binds Holliday junction (HJ) DNA. The HJ becomes 2-fold symmetrical on binding to RuvC with unstacked arms; it has a different conformation from HJ DNA in complex with RuvA. In the full resolvosome a probable DNA-RuvA(4)-RuvB(12)-RuvC(2) complex forms which resolves the HJ. It depends on Mg(2+) as a cofactor.

The protein localises to the cytoplasm. It catalyses the reaction Endonucleolytic cleavage at a junction such as a reciprocal single-stranded crossover between two homologous DNA duplexes (Holliday junction).. The RuvA-RuvB-RuvC complex processes Holliday junction (HJ) DNA during genetic recombination and DNA repair. Endonuclease that resolves HJ intermediates. Cleaves cruciform DNA by making single-stranded nicks across the HJ at symmetrical positions within the homologous arms, yielding a 5'-phosphate and a 3'-hydroxyl group; requires a central core of homology in the junction. The consensus cleavage sequence is 5'-(A/T)TT(C/G)-3'. Cleavage occurs on the 3'-side of the TT dinucleotide at the point of strand exchange. HJ branch migration catalyzed by RuvA-RuvB allows RuvC to scan DNA until it finds its consensus sequence, where it cleaves and resolves the cruciform DNA. The polypeptide is Crossover junction endodeoxyribonuclease RuvC (Aeromonas salmonicida (strain A449)).